The chain runs to 302 residues: Capsid protein (302 aa).

The segment at Phe-217–Lys-302 is disordered. Positions Pro-254 to Thr-271 are enriched in low complexity. Over residues His-288–Lys-302 the composition is skewed to polar residues.

Its subcellular location is the virion. In terms of biological role, capsid protein self-assembles to form a flexuous, filamentous capsid (Potential). The capsid encapsulates the single-stranded RNA genome. The sequence is that of Capsid protein from Botryotinia fuckeliana (Noble rot fungus).